The following is a 605-amino-acid chain: Elongation factor 4 (605 aa).

The tr-type G domain occupies 11–193 (KNIRNFSIIA…TLVDVIPAPT (183 aa)). GTP-binding positions include 23–28 (DHGKST) and 140–143 (NKID).

Belongs to the TRAFAC class translation factor GTPase superfamily. Classic translation factor GTPase family. LepA subfamily.

The protein localises to the cell inner membrane. The enzyme catalyses GTP + H2O = GDP + phosphate + H(+). In terms of biological role, required for accurate and efficient protein synthesis under certain stress conditions. May act as a fidelity factor of the translation reaction, by catalyzing a one-codon backward translocation of tRNAs on improperly translocated ribosomes. Back-translocation proceeds from a post-translocation (POST) complex to a pre-translocation (PRE) complex, thus giving elongation factor G a second chance to translocate the tRNAs correctly. Binds to ribosomes in a GTP-dependent manner. The polypeptide is Elongation factor 4 (Acinetobacter baumannii (strain AB307-0294)).